Reading from the N-terminus, the 868-residue chain is Protein NIP100 (868 aa).

The CAP-Gly domain occupies 34-84 (GETQFAKGIWYGIELDKPLGKNDGSANGIRYFDIDLKKANSNGGYYGLFCK). 3 coiled-coil regions span residues 101-175 (LNGN…HLDN), 207-375 (LDQT…QEEL), and 645-776 (SLLS…QIKE).

In terms of assembly, component of the dynactin complex composed of at least ARP1, JNM1, NIP100 and ARP10. Dynactin comprises a short rod of the ARP1 filament attached to ARP10 at its pointed-end and probably associated with the capping protein at its barbed-end. The rod is implicated in dynein cargo binding. A sidearm formed by NIP100 projects from the ARP1 filament and is implicated in motor binding.

The protein localises to the cytoplasm. Its subcellular location is the cytoskeleton. It localises to the spindle pole. Its function is as follows. Motor-binding component of the dynactin complex which assists cytoplasmic dynein by increasing its processivity and by regulation of its cargo binding. The dynactin complex is required for the spindle translocation late in anaphase and is involved in a cell wall synthesis checkpoint. This Saccharomyces cerevisiae (strain ATCC 204508 / S288c) (Baker's yeast) protein is Protein NIP100 (NIP100).